The sequence spans 461 residues: Probable Xaa-Pro aminopeptidase PEPP (461 aa).

Mn(2+) contacts are provided by Asp257, Asp268, Glu391, and Glu431.

Belongs to the peptidase M24B family. It depends on Mn(2+) as a cofactor.

The catalysed reaction is Release of any N-terminal amino acid, including proline, that is linked to proline, even from a dipeptide or tripeptide.. Its function is as follows. Catalyzes the removal of a penultimate prolyl residue from the N-termini of peptides. The sequence is that of Probable Xaa-Pro aminopeptidase PEPP (PEPP) from Colletotrichum graminicola (strain M1.001 / M2 / FGSC 10212) (Maize anthracnose fungus).